Here is a 508-residue protein sequence, read N- to C-terminus: Probable cytosol aminopeptidase (508 aa).

K274 and D279 together coordinate Mn(2+). K286 is a catalytic residue. Residues D297, D356, and E358 each coordinate Mn(2+). The active site involves R360.

Belongs to the peptidase M17 family. It depends on Mn(2+) as a cofactor.

The protein localises to the cytoplasm. The enzyme catalyses Release of an N-terminal amino acid, Xaa-|-Yaa-, in which Xaa is preferably Leu, but may be other amino acids including Pro although not Arg or Lys, and Yaa may be Pro. Amino acid amides and methyl esters are also readily hydrolyzed, but rates on arylamides are exceedingly low.. The catalysed reaction is Release of an N-terminal amino acid, preferentially leucine, but not glutamic or aspartic acids.. Presumably involved in the processing and regular turnover of intracellular proteins. Catalyzes the removal of unsubstituted N-terminal amino acids from various peptides. The protein is Probable cytosol aminopeptidase of Cutibacterium acnes (strain DSM 16379 / KPA171202) (Propionibacterium acnes).